A 124-amino-acid chain; its full sequence is MADLKKLAEEIVGLTLLEAQELKTILKDEYGIEPAAGGAVMMAGPADGAGGAAEEQTEFDVVLKNAGASKINVIKEVRGITGLGLKEAKDLVEAGGKIKEGVDKAEAEEIKGKLEAAGAEVELA.

The protein belongs to the bacterial ribosomal protein bL12 family. In terms of assembly, homodimer. Part of the ribosomal stalk of the 50S ribosomal subunit. Forms a multimeric L10(L12)X complex, where L10 forms an elongated spine to which 2 to 4 L12 dimers bind in a sequential fashion. Binds GTP-bound translation factors.

Forms part of the ribosomal stalk which helps the ribosome interact with GTP-bound translation factors. Is thus essential for accurate translation. The chain is Large ribosomal subunit protein bL12 from Jannaschia sp. (strain CCS1).